The primary structure comprises 236 residues: Probable fimbrial chaperone EcpE (236 aa).

The signal sequence occupies residues 1-27 (MFRRRGVTLTKALLTAVCMLAAPLTQA).

This sequence belongs to the EcpB/EcpE family.

Part of the ecpRABCDE operon, which encodes the E.coli common pilus (ECP). ECP is found in both commensal and pathogenic strains and plays a dual role in early-stage biofilm development and host cell recognition. The sequence is that of Probable fimbrial chaperone EcpE (ecpE) from Escherichia coli (strain K12).